Reading from the N-terminus, the 452-residue chain is Bifunctional protein GlmU (452 aa).

The segment at 1-218 (MKVLILAAGL…IVEVSGVNDR (218 aa)) is pyrophosphorylase. UDP-N-acetyl-alpha-D-glucosamine is bound by residues 6–9 (LAAG), K20, Q68, 73–74 (GT), 95–97 (YGD), G134, E147, N162, and N216. D97 serves as a coordination point for Mg(2+). A Mg(2+)-binding site is contributed by N216. The segment at 219–239 (IQLAQLETIAKQRILEKLMLS) is linker. The tract at residues 240 to 452 (GVTIVDPNST…EELKNADHKE (213 aa)) is N-acetyltransferase. Residues R321 and K339 each coordinate UDP-N-acetyl-alpha-D-glucosamine. Residue H351 is the Proton acceptor of the active site. Residues Y354 and N365 each contribute to the UDP-N-acetyl-alpha-D-glucosamine site. Residues A368, 374 to 375 (NY), S393, A411, and R428 each bind acetyl-CoA.

In the N-terminal section; belongs to the N-acetylglucosamine-1-phosphate uridyltransferase family. The protein in the C-terminal section; belongs to the transferase hexapeptide repeat family. Homotrimer. Requires Mg(2+) as cofactor.

The protein localises to the cytoplasm. It catalyses the reaction alpha-D-glucosamine 1-phosphate + acetyl-CoA = N-acetyl-alpha-D-glucosamine 1-phosphate + CoA + H(+). It carries out the reaction N-acetyl-alpha-D-glucosamine 1-phosphate + UTP + H(+) = UDP-N-acetyl-alpha-D-glucosamine + diphosphate. It functions in the pathway nucleotide-sugar biosynthesis; UDP-N-acetyl-alpha-D-glucosamine biosynthesis; N-acetyl-alpha-D-glucosamine 1-phosphate from alpha-D-glucosamine 6-phosphate (route II): step 2/2. Its pathway is nucleotide-sugar biosynthesis; UDP-N-acetyl-alpha-D-glucosamine biosynthesis; UDP-N-acetyl-alpha-D-glucosamine from N-acetyl-alpha-D-glucosamine 1-phosphate: step 1/1. The protein operates within bacterial outer membrane biogenesis; LPS lipid A biosynthesis. Its function is as follows. Catalyzes the last two sequential reactions in the de novo biosynthetic pathway for UDP-N-acetylglucosamine (UDP-GlcNAc). The C-terminal domain catalyzes the transfer of acetyl group from acetyl coenzyme A to glucosamine-1-phosphate (GlcN-1-P) to produce N-acetylglucosamine-1-phosphate (GlcNAc-1-P), which is converted into UDP-GlcNAc by the transfer of uridine 5-monophosphate (from uridine 5-triphosphate), a reaction catalyzed by the N-terminal domain. The polypeptide is Bifunctional protein GlmU (Fervidobacterium nodosum (strain ATCC 35602 / DSM 5306 / Rt17-B1)).